The chain runs to 571 residues: MRVSKYLLSTQKETPANAEVISHQLMLRAGMIRRNASGLYSYLPTGLRVLRKVEAIVREEMNKAGAIEILMPMVQPADLWVETGRWDKFGPELLRFKDRHNRDFVLGPTHEEVITDLIRKEVSSYKQLPLNLYQIQTKFRDEVRPRFGMMRSREFLMKDAYSFHLDVDTMNETYEAMYTAYSNILSRMGLAFRPVLADTGSIGGSMSHEFHVLAQSGEDLIAYSTGSDYAANIEKAESPMPTEPRGAATEALRLVDTPNAKTIAELVEQFDLDITKTVKTLIVKGATEAAPLVALIVRGDHELNEVKADKLDLVASPLEMAPEALIRDAIGAGPGSLGPVGLNMPIIIDHSVSVMSDFAAGANVDDKHYFGINWERDLPLAQAADIRNVVEGEPTPDGLGTYAMARGIEVGHIFQLGTNYSKSMNATVLDENGKSQVLLMGCYGVGVSRIVAAAIEQNFDDRGIVWPEAIAPFSVGILPMNMHKSHRVTDIAEQLYKDLSAAGIEVLLDDRKERPGVMFADMELIGIPHTVVIGDRNIDAGVFEYKNRRTGEKQDIPFDQLVDFLKNAVKS.

The protein belongs to the class-II aminoacyl-tRNA synthetase family. ProS type 1 subfamily. In terms of assembly, homodimer.

Its subcellular location is the cytoplasm. The catalysed reaction is tRNA(Pro) + L-proline + ATP = L-prolyl-tRNA(Pro) + AMP + diphosphate. In terms of biological role, catalyzes the attachment of proline to tRNA(Pro) in a two-step reaction: proline is first activated by ATP to form Pro-AMP and then transferred to the acceptor end of tRNA(Pro). As ProRS can inadvertently accommodate and process non-cognate amino acids such as alanine and cysteine, to avoid such errors it has two additional distinct editing activities against alanine. One activity is designated as 'pretransfer' editing and involves the tRNA(Pro)-independent hydrolysis of activated Ala-AMP. The other activity is designated 'posttransfer' editing and involves deacylation of mischarged Ala-tRNA(Pro). The misacylated Cys-tRNA(Pro) is not edited by ProRS. The protein is Proline--tRNA ligase of Shewanella sp. (strain W3-18-1).